Here is a 119-residue protein sequence, read N- to C-terminus: Ribonuclease P protein component (119 aa).

It belongs to the RnpA family. In terms of assembly, consists of a catalytic RNA component (M1 or rnpB) and a protein subunit.

It carries out the reaction Endonucleolytic cleavage of RNA, removing 5'-extranucleotides from tRNA precursor.. In terms of biological role, RNaseP catalyzes the removal of the 5'-leader sequence from pre-tRNA to produce the mature 5'-terminus. It can also cleave other RNA substrates such as 4.5S RNA. The protein component plays an auxiliary but essential role in vivo by binding to the 5'-leader sequence and broadening the substrate specificity of the ribozyme. This is Ribonuclease P protein component from Corynebacterium diphtheriae (strain ATCC 700971 / NCTC 13129 / Biotype gravis).